The following is a 1017-amino-acid chain: NLR family CARD domain-containing protein 4 (1017 aa).

Residues 1 to 88 (MNFIKENSQV…PLFQELHGLS (88 aa)) enclose the CARD domain. The segment at 95–298 (EEDLDDLAQE…QFGALIAEVG (204 aa)) is nucleotide-binding domain (NBD). The NACHT domain occupies 163-476 (SPCIIEGESG…VTKGNGHLQK (314 aa)). 169–176 (GESGKGKS) lines the ATP pocket. Positions 356–463 (SHTQTTLFCT…RLSSLLTSGE (108 aa)) are winged-helix domain (WHD). The residue at position 533 (serine 533) is a Phosphoserine. 12 LRR repeats span residues 578–598 (FFRG…LFDF), 649–672 (KQEF…DIKY), 728–751 (VTNL…LTDN), 755–778 (LKNL…KLAE), 780–805 (LTNL…DYIV), 817–840 (EIQL…LHNL), 841–863 (ARLS…ALQQ), 871–895 (LEQL…LLEQ), 904–926 (KLGL…FFEK), 929–956 (LENF…GFEN), 958–978 (KELV…SLVR), and 992–1014 (EVQL…AFKL).

As to quaternary structure, homooligomer; homooligomerizes following activation of Naip proteins by pathogenic proteins such as S.typhimurium (Salmonella) flagellin or PrgJ. Component of the NLRC4 inflammasome, at least composed of NLRC4, caspase-1 (CASP1) and some NAIP family member. Interacts with EIF2AK2/PKR. Phosphorylated at Ser-533 following infection of macrophages with S.typhimurium (Salmonella). Phosphorylation is essential for NLRC4 inflammasome function to promote caspase-1 activation and pyroptosis. PRKCD phosphorylates Ser-533 in vitro.

It is found in the cytoplasm. Its subcellular location is the cytosol. Key component of inflammasomes that indirectly senses specific proteins from pathogenic bacteria and fungi and responds by assembling an inflammasome complex that promotes caspase-1 activation, cytokine production and macrophage pyroptosis. The NLRC4 inflammasome is activated as part of the innate immune response to a range of intracellular bacteria. The sequence is that of NLR family CARD domain-containing protein 4 (NLRC4) from Bos taurus (Bovine).